The primary structure comprises 122 residues: UPF0102 protein CTC_01256 (122 aa).

Belongs to the UPF0102 family.

This Clostridium tetani (strain Massachusetts / E88) protein is UPF0102 protein CTC_01256.